The sequence spans 241 residues: tRNA (guanine-N(1)-)-methyltransferase (241 aa).

Residues Gly108 and 127 to 132 contribute to the S-adenosyl-L-methionine site; that span reads LGDYVL.

Belongs to the RNA methyltransferase TrmD family. Homodimer.

It localises to the cytoplasm. The catalysed reaction is guanosine(37) in tRNA + S-adenosyl-L-methionine = N(1)-methylguanosine(37) in tRNA + S-adenosyl-L-homocysteine + H(+). In terms of biological role, specifically methylates guanosine-37 in various tRNAs. In Streptococcus suis (strain 98HAH33), this protein is tRNA (guanine-N(1)-)-methyltransferase.